Reading from the N-terminus, the 48-residue chain is Large ribosomal subunit protein bL32 (48 aa).

It belongs to the bacterial ribosomal protein bL32 family.

This chain is Large ribosomal subunit protein bL32, found in Helicobacter pylori (strain P12).